A 281-amino-acid polypeptide reads, in one-letter code: Bis(5'-nucleosyl)-tetraphosphatase, symmetrical (281 aa).

Belongs to the Ap4A hydrolase family.

It carries out the reaction P(1),P(4)-bis(5'-adenosyl) tetraphosphate + H2O = 2 ADP + 2 H(+). Its function is as follows. Hydrolyzes diadenosine 5',5'''-P1,P4-tetraphosphate to yield ADP. The sequence is that of Bis(5'-nucleosyl)-tetraphosphatase, symmetrical from Acidovorax ebreus (strain TPSY) (Diaphorobacter sp. (strain TPSY)).